The chain runs to 96 residues: MQRRQLEERQRKAEIEAQKDAILRTILTPEARQRLTNVKLVRPELAEAIENQLIALAQSGRIQAQITDDELKQILAQLNSQTRKDYKITIKERGWK.

This sequence belongs to the PDCD5 family.

The sequence is that of DNA-binding protein Saci_1468 from Sulfolobus acidocaldarius (strain ATCC 33909 / DSM 639 / JCM 8929 / NBRC 15157 / NCIMB 11770).